The sequence spans 191 residues: Molybdenum cofactor guanylyltransferase (191 aa).

GTP contacts are provided by residues 13 to 15 (LAG), lysine 26, aspartate 72, and aspartate 102. Aspartate 102 provides a ligand contact to Mg(2+).

This sequence belongs to the MobA family. In terms of assembly, monomer. Requires Mg(2+) as cofactor.

It is found in the cytoplasm. The catalysed reaction is Mo-molybdopterin + GTP + H(+) = Mo-molybdopterin guanine dinucleotide + diphosphate. Transfers a GMP moiety from GTP to Mo-molybdopterin (Mo-MPT) cofactor (Moco or molybdenum cofactor) to form Mo-molybdopterin guanine dinucleotide (Mo-MGD) cofactor. The protein is Molybdenum cofactor guanylyltransferase of Pseudomonas putida (Arthrobacter siderocapsulatus).